We begin with the raw amino-acid sequence, 404 residues long: Chorismate synthase (404 aa).

Residues R40 and R46 each coordinate NADP(+). FMN is bound by residues 135–137 (RAS), 256–257 (QA), G300, 315–319 (KPIST), and R341.

Belongs to the chorismate synthase family. Homotetramer. FMNH2 is required as a cofactor.

It catalyses the reaction 5-O-(1-carboxyvinyl)-3-phosphoshikimate = chorismate + phosphate. Its pathway is metabolic intermediate biosynthesis; chorismate biosynthesis; chorismate from D-erythrose 4-phosphate and phosphoenolpyruvate: step 7/7. Catalyzes the anti-1,4-elimination of the C-3 phosphate and the C-6 proR hydrogen from 5-enolpyruvylshikimate-3-phosphate (EPSP) to yield chorismate, which is the branch point compound that serves as the starting substrate for the three terminal pathways of aromatic amino acid biosynthesis. This reaction introduces a second double bond into the aromatic ring system. In Mycobacterium sp. (strain JLS), this protein is Chorismate synthase.